Reading from the N-terminus, the 285-residue chain is Protease HtpX homolog (285 aa).

2 consecutive transmembrane segments (helical) span residues 7 to 27 (TAML…MIGG) and 30 to 50 (GMTI…WFSD). His-131 serves as a coordination point for Zn(2+). The active site involves Glu-132. His-135 is a Zn(2+) binding site. A run of 2 helical transmembrane segments spans residues 146–166 (ISAT…FFGG) and 177–197 (IAGI…QMAI). Glu-202 is a Zn(2+) binding site.

Belongs to the peptidase M48B family. It depends on Zn(2+) as a cofactor.

Its subcellular location is the cell inner membrane. The polypeptide is Protease HtpX homolog (Burkholderia thailandensis (strain ATCC 700388 / DSM 13276 / CCUG 48851 / CIP 106301 / E264)).